Reading from the N-terminus, the 476-residue chain is Nodulation protein NoeA (476 aa).

Not known; does not seem to participate in nod factor synthesis but required for nodulation on some specific Medicago species such as M.littoralis. The sequence is that of Nodulation protein NoeA (noeA) from Rhizobium meliloti (strain 1021) (Ensifer meliloti).